Here is a 37-residue protein sequence, read N- to C-terminus: Large ribosomal subunit protein bL36 (37 aa).

It belongs to the bacterial ribosomal protein bL36 family.

The sequence is that of Large ribosomal subunit protein bL36 from Dechloromonas aromatica (strain RCB).